The chain runs to 423 residues: SH2 domain-containing protein 5 (423 aa).

In terms of domain architecture, PID spans 28–146 (AQYVGSFPVD…LLCRSFQLAY (119 aa)). Residues 296–392 (WAFAGISRPC…LDMGRLNPTY (97 aa)) enclose the SH2 domain. Residues 392-423 (YEEQDCGPPGRPPRTLRPLSHAKSEAELQGLG) are disordered.

Interacts with BCR.

It localises to the postsynaptic density. Its function is as follows. May be involved in synaptic plasticity regulation through the control of Rac-GTP levels. The chain is SH2 domain-containing protein 5 from Homo sapiens (Human).